The primary structure comprises 349 residues: Flagellar P-ring protein (349 aa).

The first 20 residues, 1–20 (MSKAIKILLPLLLFSLSLQA), serve as a signal peptide directing secretion.

The protein belongs to the FlgI family. The basal body constitutes a major portion of the flagellar organelle and consists of four rings (L,P,S, and M) mounted on a central rod.

The protein resides in the periplasm. Its subcellular location is the bacterial flagellum basal body. In terms of biological role, assembles around the rod to form the L-ring and probably protects the motor/basal body from shearing forces during rotation. In Wolinella succinogenes (strain ATCC 29543 / DSM 1740 / CCUG 13145 / JCM 31913 / LMG 7466 / NCTC 11488 / FDC 602W) (Vibrio succinogenes), this protein is Flagellar P-ring protein.